We begin with the raw amino-acid sequence, 428 residues long: Histidine--tRNA ligase (428 aa).

The protein belongs to the class-II aminoacyl-tRNA synthetase family. In terms of assembly, homodimer.

Its subcellular location is the cytoplasm. The enzyme catalyses tRNA(His) + L-histidine + ATP = L-histidyl-tRNA(His) + AMP + diphosphate + H(+). The polypeptide is Histidine--tRNA ligase (Halalkalibacterium halodurans (strain ATCC BAA-125 / DSM 18197 / FERM 7344 / JCM 9153 / C-125) (Bacillus halodurans)).